We begin with the raw amino-acid sequence, 304 residues long: Putative S-adenosyl-L-methionine-dependent methyltransferase YktD (304 aa).

S-adenosyl-L-methionine-binding positions include aspartate 134 and 163-164; that span reads DF.

It belongs to the UPF0677 family.

May be involved in polyketide synthesis. In Bacillus subtilis (strain 168), this protein is Putative S-adenosyl-L-methionine-dependent methyltransferase YktD (yktD).